The primary structure comprises 1002 residues: Collagen alpha-2(I) chain (1002 aa).

Positions 1-1002 are disordered; the sequence is SGGFDFSFLP…PGPPGPPGAS (1002 aa). Pro-10, Pro-13, Pro-28, and Pro-34 each carry 4-hydroxyproline. Low complexity predominate over residues 17–60; that stretch reads GPMGLMGPRGPPGASGAPGPQGFQGPAGEPGEPGQTGPAGARGP. Lys-89 bears the 5-hydroxylysine; alternate mark. Lys-89 is a glycosylation site (O-linked (Gal...) hydroxylysine; alternate). Composition is skewed to low complexity over residues 145–166 and 211–232; these read SRGSDGSVGPVGPAGPIGSAGP and PGANGLTGAKGAAGLPGVAGAP. Residues 266 to 275 show a composition bias toward gly residues; sequence GESGGKGEPG. The segment covering 276–286 has biased composition (low complexity); that stretch reads SAGPQGPPGSS. Residues 308–317 are compositionally biased toward gly residues; that stretch reads GLRGGPGSRG. Residues 330-346 are compositionally biased toward low complexity; that stretch reads PAGARGASGPAGVRGPS. 2 positions are modified to 4-hydroxyproline: Pro-352 and Pro-355. A compositionally biased stretch (low complexity) spans 381 to 400; sequence LPGIDGRPGPIGPAGARGEA. Residues 449 to 458 are compositionally biased toward gly residues; it reads GVQGGKGEQG. Low complexity-rich tracts occupy residues 505–522 and 534–544; these read PGESGAVGPSGAIGSRGP and EPGVVGAPGTA. Positions 545–554 are enriched in gly residues; that stretch reads GPAGSGGLPG. Composition is skewed to low complexity over residues 577–621 and 628–648; these read VGTT…PRGS and VGPAGPNGFAGPAGAAGQPGA. A compositionally biased stretch (basic and acidic residues) spans 649-658; that stretch reads KGERGTKGPK. Positions 666–676 are enriched in low complexity; that stretch reads PTGPVGSAGPA. Over residues 686–695 the composition is skewed to gly residues; it reads GSRGDGGPPG. The span at 697–706 shows a compositional bias: low complexity; the sequence is TGFPGAAGRT. Gly residues predominate over residues 743–752; sequence GETGAGGPPG. Composition is skewed to low complexity over residues 760–787 and 795–805; these read SGEPGTAGPPGTAGPQGLLGAPGILGLP and LPGVAGAVGEP. Residues 806–828 show a composition bias toward gly residues; it reads GPLGIGPPGARGPSGGVGPGVNG. Basic and acidic residues predominate over residues 833–851; it reads AGRDGPPGRDGLPGHKGER. Low complexity predominate over residues 853-898; it reads YAGNAGPVGAAGAPGPHGAVGPAGKHGNRGEPGPVGSAGPVGALGP. Basic and acidic residues predominate over residues 908–919; sequence RGDKGEAGDKGP. The segment covering 987 to 1002 has biased composition (pro residues); sequence SGPPGPPGPPGPPGAS.

This sequence belongs to the fibrillar collagen family. Trimers of one alpha 2(I) and two alpha 1(I) chains. Interacts (via C-terminus) with TMEM131 (via PapD-L domain); the interaction is direct and is involved in assembly and TRAPPIII ER-to-Golgi transport complex-dependent secretion of collagen. Prolines at the third position of the tripeptide repeating unit (G-X-Y) are hydroxylated in some or all of the chains. As to expression, expressed in bones.

It is found in the secreted. It localises to the extracellular space. Its subcellular location is the extracellular matrix. In terms of biological role, type I collagen is a member of group I collagen (fibrillar forming collagen). The sequence is that of Collagen alpha-2(I) chain from Glossotherium robustum (Ground sloth).